A 2114-amino-acid chain; its full sequence is Protein CELLULOSE SYNTHASE INTERACTIVE 2 (2114 aa).

ARM repeat units lie at residues 2-42 (TSEM…LLGL), 46-87 (KKEC…VLCK), 89-128 (KNVR…EVSL), 135-177 (NVGT…NLCG), 180-219 (DGFW…RLIR), 222-262 (TSSI…AITS), 265-305 (EEAI…SYGT), 354-394 (GDTR…SLFG), 396-435 (VDLS…NLCK), 479-519 (EESR…NLCC), 522-561 (EEIR…KLIK), 563-595 (ADPS…HVLA), 601-640 (EFVT…DLFS), 643-682 (KDLC…SLSN), 708-750 (AKTN…RVLR), 774-816 (SDVF…LLAK), 825-865 (HNPF…RFCK), 870-910 (LLGR…CAAK), 914-953 (TLWA…IQRP), 994-1033 (PSNR…KWIA), 1044-1083 (PKVV…ALVR), 1087-1128 (DKTI…LVQN), 1141-1182 (ERVR…RIAD), 1185-1225 (DLSK…SLFR), 1227-1264 (PEIT…LCEL), 1265-1304 (FSSE…ALVK), 1312-1353 (RPDI…FLFT), 1355-1394 (EGLR…RLLD), 1396-1435 (KRFV…KMAK), 1454-1494 (ISQL…MVQP), 1496-1525 (LLIL…KPMV), 1526-1564 (LESL…SLLE), 1566-1605 (QRFQ…RSSV), 1606-1648 (TWPK…NILR), 1650-1689 (NPEH…ENQD), 1690-1730 (SSSV…RNPK), 1732-1771 (RETK…DISQ), 1772-1813 (HEGL…NFAM), 1816-1855 (RTSR…SLFS), 1857-1898 (HTLQ…TILT), 1901-1940 (PKLR…TLRQ), and 1949-1993 (TARS…CLPG). Residues 1974–2087 (SPAPSSFHER…LSEGSYSGIF (114 aa)) enclose the C2 domain.

As to quaternary structure, associates with cellulase synthase (CESA) complexes. Binds to cortical microtubules.

Its subcellular location is the cell membrane. The protein resides in the cytoplasm. It is found in the cytoskeleton. Functionally, regulator of the microtubular cytoskeleton. Microtubule-associated protein involved in the association of cellulase synthase (CESA) complexes (CSCs) and cortical microtubules. Promotes dynamics of CSCs in the plasma membrane. Regulates primary cell wall biosynthesis and cellulose microfibrils organization. The polypeptide is Protein CELLULOSE SYNTHASE INTERACTIVE 2 (Arabidopsis thaliana (Mouse-ear cress)).